A 156-amino-acid polypeptide reads, in one-letter code: Small ribosomal subunit protein uS7 (156 aa).

Belongs to the universal ribosomal protein uS7 family. Part of the 30S ribosomal subunit. Contacts proteins S9 and S11.

One of the primary rRNA binding proteins, it binds directly to 16S rRNA where it nucleates assembly of the head domain of the 30S subunit. Is located at the subunit interface close to the decoding center, probably blocks exit of the E-site tRNA. The sequence is that of Small ribosomal subunit protein uS7 from Pectobacterium carotovorum subsp. carotovorum (strain PC1).